The following is a 147-amino-acid chain: MADSGPAGGAALAAPAPGPGSGGAGPRVYFQSPPGAAGEGPGGADDEGPVRRQGKVTVKYDRKELRKRLNLEEWILEQLTRLYDCQEEEIPELEIDVDELLDMESDDTRAARVKELLVDCYKPTEAFISGLLDKIRGMQKLSTPQKK.

Positions 1–15 are enriched in low complexity; the sequence is MADSGPAGGAALAAP. The disordered stretch occupies residues 1-55; sequence MADSGPAGGAALAAPAPGPGSGGAGPRVYFQSPPGAAGEGPGGADDEGPVRRQGK. Position 2 is an N-acetylalanine (A2). S21 is modified (phosphoserine). Y29 is subject to Phosphotyrosine. S32 bears the Phosphoserine mark. T57 carries the phosphothreonine modification. Positions 61 to 103 form a coiled coil; it reads DRKELRKRLNLEEWILEQLTRLYDCQEEEIPELEIDVDELLDM.

The protein belongs to the PP1 inhibitor family. Phosphorylated primarily on Thr-57 by PKC (in vitro). An unknown Ser is also phosphorylated by PKC (in vitro).

Its subcellular location is the cytoplasm. In terms of biological role, inhibitor of PPP1CA. Has over 50-fold higher inhibitory activity when phosphorylated. The chain is Protein phosphatase 1 regulatory subunit 14B (PPP1R14B) from Sus scrofa (Pig).